The sequence spans 102 residues: Cytochrome b (102 aa).

3 consecutive transmembrane segments (helical) span residues 1-21 (FGSL…FLAM), 45-66 (WLMR…FLHI), and 81-101 (WNIG…GYVL). Residues His51 and His65 each coordinate heme b.

This sequence belongs to the cytochrome b family. The cytochrome bc1 complex contains 3 respiratory subunits (MT-CYB, CYC1 and UQCRFS1), 2 core proteins (UQCRC1 and UQCRC2) and probably 6 low-molecular weight proteins. The cofactor is heme b.

The protein localises to the mitochondrion inner membrane. Functionally, component of the ubiquinol-cytochrome c reductase complex (complex III or cytochrome b-c1 complex) that is part of the mitochondrial respiratory chain. The b-c1 complex mediates electron transfer from ubiquinol to cytochrome c. Contributes to the generation of a proton gradient across the mitochondrial membrane that is then used for ATP synthesis. This is Cytochrome b (mt-cyb) from Ambystoma tigrinum (Eastern tiger salamander).